A 130-amino-acid polypeptide reads, in one-letter code: Anti-adapter protein IraD (130 aa).

Belongs to the GpW/Gp25 family. IraD subfamily. In terms of assembly, interacts with RssB.

The protein resides in the cytoplasm. Inhibits RpoS proteolysis by regulating RssB activity, thereby increasing the stability of the sigma stress factor RpoS during oxidative stress. Its effect on RpoS stability is due to its interaction with RssB, which probably blocks the interaction of RssB with RpoS, and the consequent delivery of the RssB-RpoS complex to the ClpXP protein degradation pathway. The protein is Anti-adapter protein IraD of Escherichia coli (strain K12 / MC4100 / BW2952).